The chain runs to 1095 residues: Tyrosine-sulfated glycopeptide receptor 1 (1095 aa).

A helical membrane pass occupies residues 23–43 (PHMVLFVLLYVLSISVFFLTV). 2 N-linked (GlcNAc...) asparagine glycosylation sites follow: N62 and N73. 19 LRR repeats span residues 91 to 115 (ENRV…VLDL), 116 to 139 (QRLS…FLSA), 141 to 165 (DQLL…SFGN), 170 to 195 (IFPI…VFLQ), 197 to 221 (AFNL…MCTA), 223 to 246 (PQLT…LSRC), 247 to 270 (SRLS…IYNL), 271 to 294 (PELE…ITRL), 295 to 318 (TKLT…IGKL), 320 to 342 (KLSS…LANC), 344 to 366 (KLVK…DFSR), 367 to 391 (FQSL…VYSC), 393 to 415 (MMTA…VLEL), 416 to 439 (ESLS…SILQ), 441 to 466 (CKKL…DFLR), 470 to 494 (FPSL…LIKL), 495 to 517 (QRVE…WLGT), 518 to 542 (LPDL…LFQL), and 566 to 589 (NPNN…IYIK). The N-linked (GlcNAc...) asparagine glycan is linked to N165. N-linked (GlcNAc...) asparagine glycans are attached at residues N199, N204, and N207. N-linked (GlcNAc...) asparagine glycosylation is present at N258. A glycan (N-linked (GlcNAc...) asparagine) is linked at N341. N-linked (GlcNAc...) asparagine glycosylation is present at N377. N-linked (GlcNAc...) asparagine glycosylation is present at N430. N569, N592, N616, N627, N640, N662, and N714 each carry an N-linked (GlcNAc...) asparagine glycan. LRR repeat units follow at residues 604-628 (LKVL…LSNL), 629-652 (TNLE…LTGL), and 654-677 (FLSY…QFDT). Residues 721–741 (LVLGLFFGVSLILVLLALLVL) traverse the membrane as a helical segment. Phosphothreonine is present on residues T792 and T800. One can recognise a Protein kinase domain in the interval 803–1074 (FSQANIIGCG…PNIQQVVDWL (272 aa)). ATP contacts are provided by residues 809–817 (IGCGGFGLV) and K831. Residues Y876 and Y916 each carry the phosphotyrosine modification. The active-site Proton acceptor is the D929. Y971 carries the phosphotyrosine modification.

It belongs to the protein kinase superfamily. Ser/Thr protein kinase family. In terms of assembly, homo- and heterodimers with PSKR1. Interacts (via C-terminus) with AHA1 and AHA2 (via the R-domain). Autophosphorylated. In terms of tissue distribution, expressed ubiquitously, including in the shoot apical meristem and in the elongation zone of the root meristem.

The protein resides in the cell membrane. The enzyme catalyses L-seryl-[protein] + ATP = O-phospho-L-seryl-[protein] + ADP + H(+). It catalyses the reaction L-threonyl-[protein] + ATP = O-phospho-L-threonyl-[protein] + ADP + H(+). Functionally, tyrosine-sulfated glycopeptide receptor with a serine/threonine-protein kinase activity. Regulates, in response to tyrosine-sulfated glycopeptide binding, a signaling cascade involved in cellular proliferation and plant growth. Not involved in PSK perception. Involved in plant immunity, with antagonistic effects on bacterial and fungal resistances. Mediates activation of the plasma membrane H(+)-ATPase by PSY1. Phosphorylates AHA2 at Thr-881. The sequence is that of Tyrosine-sulfated glycopeptide receptor 1 from Arabidopsis thaliana (Mouse-ear cress).